Reading from the N-terminus, the 124-residue chain is Large ribosomal subunit protein bL12 (124 aa).

This sequence belongs to the bacterial ribosomal protein bL12 family. Homodimer. Part of the ribosomal stalk of the 50S ribosomal subunit. Forms a multimeric L10(L12)X complex, where L10 forms an elongated spine to which 2 to 4 L12 dimers bind in a sequential fashion. Binds GTP-bound translation factors.

Forms part of the ribosomal stalk which helps the ribosome interact with GTP-bound translation factors. Is thus essential for accurate translation. The polypeptide is Large ribosomal subunit protein bL12 (Paracoccus denitrificans (strain Pd 1222)).